The sequence spans 170 residues: MDVKWDSMTFDEMEEVKRNVFFTTLEQLKGWARSNSLWPLTFGLACCAIEMMAVGGAHYDLDRFGSFFRASPRQSDVMIVSGTVTKKMAPLLRRLYDQMPEPKWVIAMGSCATAGGPYVKSYSVVKGVDQIVPVDVYIPGCPPNPAALIYGIHKLKEKIRLEAKTGKKVL.

C46, C47, C111, and C141 together coordinate [4Fe-4S] cluster.

Belongs to the complex I 20 kDa subunit family. In terms of assembly, NDH-1 is composed of 14 different subunits. Subunits NuoB, C, D, E, F, and G constitute the peripheral sector of the complex. Requires [4Fe-4S] cluster as cofactor.

Its subcellular location is the cell membrane. It catalyses the reaction a quinone + NADH + 5 H(+)(in) = a quinol + NAD(+) + 4 H(+)(out). NDH-1 shuttles electrons from NADH, via FMN and iron-sulfur (Fe-S) centers, to quinones in the respiratory chain. The immediate electron acceptor for the enzyme in this species is believed to be a menaquinone. Couples the redox reaction to proton translocation (for every two electrons transferred, four hydrogen ions are translocated across the cytoplasmic membrane), and thus conserves the redox energy in a proton gradient. The polypeptide is NADH-quinone oxidoreductase subunit B (Geobacillus thermodenitrificans (strain NG80-2)).